Here is a 452-residue protein sequence, read N- to C-terminus: Bifunctional protein GlmU (452 aa).

The pyrophosphorylase stretch occupies residues 1–226 (MNFSAVILAA…PIEVEGVNDR (226 aa)). UDP-N-acetyl-alpha-D-glucosamine contacts are provided by residues 8–11 (LAAG), Lys22, Gln73, 78–79 (GT), 100–102 (YGD), Gly137, Glu151, Asn166, and Asn224. A Mg(2+)-binding site is contributed by Asp102. Asn224 lines the Mg(2+) pocket. A linker region spans residues 227–247 (AQLARLERAYQAAQAQKLLEQ). The segment at 248 to 452 (GVMLRDPSRF…IANWQRPTKK (205 aa)) is N-acetyltransferase. Residues Arg330 and Lys348 each coordinate UDP-N-acetyl-alpha-D-glucosamine. His360 serves as the catalytic Proton acceptor. UDP-N-acetyl-alpha-D-glucosamine contacts are provided by Tyr363 and Asn374. Acetyl-CoA is bound by residues Ala377, 383 to 384 (NY), Ser402, Ala420, and Arg437.

The protein in the N-terminal section; belongs to the N-acetylglucosamine-1-phosphate uridyltransferase family. It in the C-terminal section; belongs to the transferase hexapeptide repeat family. In terms of assembly, homotrimer. Requires Mg(2+) as cofactor.

The protein localises to the cytoplasm. The enzyme catalyses alpha-D-glucosamine 1-phosphate + acetyl-CoA = N-acetyl-alpha-D-glucosamine 1-phosphate + CoA + H(+). It catalyses the reaction N-acetyl-alpha-D-glucosamine 1-phosphate + UTP + H(+) = UDP-N-acetyl-alpha-D-glucosamine + diphosphate. It functions in the pathway nucleotide-sugar biosynthesis; UDP-N-acetyl-alpha-D-glucosamine biosynthesis; N-acetyl-alpha-D-glucosamine 1-phosphate from alpha-D-glucosamine 6-phosphate (route II): step 2/2. Its pathway is nucleotide-sugar biosynthesis; UDP-N-acetyl-alpha-D-glucosamine biosynthesis; UDP-N-acetyl-alpha-D-glucosamine from N-acetyl-alpha-D-glucosamine 1-phosphate: step 1/1. It participates in bacterial outer membrane biogenesis; LPS lipid A biosynthesis. Its function is as follows. Catalyzes the last two sequential reactions in the de novo biosynthetic pathway for UDP-N-acetylglucosamine (UDP-GlcNAc). The C-terminal domain catalyzes the transfer of acetyl group from acetyl coenzyme A to glucosamine-1-phosphate (GlcN-1-P) to produce N-acetylglucosamine-1-phosphate (GlcNAc-1-P), which is converted into UDP-GlcNAc by the transfer of uridine 5-monophosphate (from uridine 5-triphosphate), a reaction catalyzed by the N-terminal domain. This is Bifunctional protein GlmU from Aliivibrio fischeri (strain ATCC 700601 / ES114) (Vibrio fischeri).